We begin with the raw amino-acid sequence, 344 residues long: Lipopolysaccharide heptosyltransferase 3 (344 aa).

The protein belongs to the glycosyltransferase 9 family.

The enzyme catalyses an L-alpha-D-Hep-(1-&gt;3)-4-O-phospho-L-alpha-D-Hep-(1-&gt;5)-[alpha-Kdo-(2-&gt;4)]-alpha-Kdo-(2-&gt;6)-lipid A + ADP-L-glycero-beta-D-manno-heptose = an L-alpha-D-Hep-(1-&gt;7)-L-alpha-D-Hep-(1-&gt;3)-4-O-phospho-L-alpha-D-Hep-(1-&gt;5)-[alpha-Kdo-(2-&gt;4)]-alpha-Kdo-(2-&gt;6)-lipid A + ADP + H(+). It catalyses the reaction L-alpha-D-Hep-(1-&gt;3)-4-O-phospho-L-alpha-D-Hep-(1-&gt;5)-[alpha-Kdo-(2-&gt;4)]-alpha-Kdo-(2-&gt;6)-lipid A (E. coli) + ADP-L-glycero-beta-D-manno-heptose = L-alpha-D-Hep-(1-&gt;7)-L-alpha-D-Hep-(1-&gt;3)-4-O-phospho-L-alpha-D-Hep-(1-&gt;5)-[alpha-Kdo-(2-&gt;4)]-alpha-Kdo-(2-&gt;6)-lipid A (E. coli) + ADP + H(+). Its pathway is bacterial outer membrane biogenesis; LPS core biosynthesis. In terms of biological role, glycosyltransferase involved in the biosynthesis of the core oligosaccharide region of lipopolysaccharide (LPS). Catalyzes the addition of the third heptose unit (HepIII) to the second heptose unit (HepII) of the phospho-Hep2-Kdo2-lipid A module. This chain is Lipopolysaccharide heptosyltransferase 3, found in Escherichia coli (strain K12).